A 44-amino-acid chain; its full sequence is Non-structural protein 7b (44 aa).

The helical transmembrane segment at 9-29 (FYLCFLAFLLFLVLIMLLIFW) threads the bilayer.

It localises to the host membrane. In Bat coronavirus HKU3 (BtCoV), this protein is Non-structural protein 7b.